A 449-amino-acid chain; its full sequence is Heterogeneous nuclear ribonucleoprotein H2 (449 aa).

Met1 carries the N-acetylmethionine modification. Met2 is modified (N-acetylmethionine; in Heterogeneous nuclear ribonucleoprotein H2, N-terminally processed). Residues 11–90 enclose the RRM 1 domain; sequence FVVKVRGLPW…RYVEVFKSNS (80 aa). A Phosphoserine modification is found at Ser23. Residue Lys35 forms a Glycyl lysine isopeptide (Lys-Gly) (interchain with G-Cter in SUMO2) linkage. Phosphoserine is present on residues Ser54 and Ser63. Lys87 is covalently cross-linked (Glycyl lysine isopeptide (Lys-Gly) (interchain with G-Cter in SUMO2)). At Ser90 the chain carries Phosphoserine. Lys98 is covalently cross-linked (Glycyl lysine isopeptide (Lys-Gly) (interchain with G-Cter in SUMO2)). One can recognise an RRM 2 domain in the interval 111–188; the sequence is GFVRLRGLPF…RYIEIFKSSR (78 aa). Residue Arg233 is modified to Dimethylated arginine; alternate. Arg233 carries the post-translational modification Omega-N-methylarginine; alternate. The 1-1 repeat unit spans residues 234-249; it reads GAYGGGYGGYDDYGGY. Positions 234 to 433 are 2 X 16 AA Gly-rich approximate repeats; the sequence is GAYGGGYGGY…YGGQSSMSGY (200 aa). Tyr246 is modified (phosphotyrosine). The RRM 3 domain occupies 289–364; it reads HCVHMRGLPY…RYVELFLNST (76 aa). Residue Ser310 is modified to Phosphoserine. 3 consecutive repeat copies span residues 354–372, 374–392, and 418–433. Residues 354–392 form a 2 X 19 AA perfect repeats region; the sequence is HRYVELFLNSTAGTSGGAYDHSYVELFLNSTAGASGGAY.

As to quaternary structure, component of a ribonucleoprotein complex containing mRNAs and RNA-binding proteins including DDX5, HNRNPH2 and SRSF1 as well as splicing regulator ARVCF. Interacts with TXNL4/DIM1.

It is found in the nucleus. Its subcellular location is the nucleoplasm. This protein is a component of the heterogeneous nuclear ribonucleoprotein (hnRNP) complexes which provide the substrate for the processing events that pre-mRNAs undergo before becoming functional, translatable mRNAs in the cytoplasm. Binds poly(RG). In Mus musculus (Mouse), this protein is Heterogeneous nuclear ribonucleoprotein H2 (Hnrnph2).